We begin with the raw amino-acid sequence, 552 residues long: DNA ligase (552 aa).

Residue E229 participates in ATP binding. K231 (N6-AMP-lysine intermediate) is an active-site residue. R236 and E283 together coordinate ATP. Mg(2+) contacts are provided by E283 and E377. ATP contacts are provided by K382 and K397.

This sequence belongs to the ATP-dependent DNA ligase family. As to quaternary structure, interacts with host TOP2A and TOP2B. Requires Mg(2+) as cofactor.

The protein localises to the host cytoplasm. The catalysed reaction is ATP + (deoxyribonucleotide)n-3'-hydroxyl + 5'-phospho-(deoxyribonucleotide)m = (deoxyribonucleotide)n+m + AMP + diphosphate.. Its function is as follows. DNA ligase that seals nicks in double-stranded DNA during DNA replication, DNA recombination and DNA repair. Recruits cellular topoisomerase II to sites of viral replication and assembly. The protein is DNA ligase (OPG180) of Homo sapiens (Human).